Consider the following 211-residue polypeptide: tRNA (guanine-N(7)-)-methyltransferase (211 aa).

S-adenosyl-L-methionine contacts are provided by E44, D69, D96, and D118. D118 is an active-site residue. K122 contributes to the substrate binding site. The tract at residues 124–129 is interaction with RNA; the sequence is RHEKRR. Residues D154 and 191 to 194 contribute to the substrate site; that span reads TEYE.

The protein belongs to the class I-like SAM-binding methyltransferase superfamily. TrmB family.

The enzyme catalyses guanosine(46) in tRNA + S-adenosyl-L-methionine = N(7)-methylguanosine(46) in tRNA + S-adenosyl-L-homocysteine. Its pathway is tRNA modification; N(7)-methylguanine-tRNA biosynthesis. Its function is as follows. Catalyzes the formation of N(7)-methylguanine at position 46 (m7G46) in tRNA. The sequence is that of tRNA (guanine-N(7)-)-methyltransferase from Streptococcus mutans serotype c (strain ATCC 700610 / UA159).